Here is a 105-residue protein sequence, read N- to C-terminus: MVTQKIYIELKAFDHCLLDGSARNIILIARRSGAKVNGPVFFPRRIAKFIVNRSTHVDKKSREQFEIRTHKRLISLPKANSAILQALMSLQLPAGVDVKVKVVGG.

The protein belongs to the universal ribosomal protein uS10 family. Part of the 30S ribosomal subunit.

In terms of biological role, involved in the binding of tRNA to the ribosomes. The sequence is that of Small ribosomal subunit protein uS10 from Anaplasma marginale (strain Florida).